Consider the following 319-residue polypeptide: NAP1-binding protein (319 aa).

The segment covering 34–43 (SALRSRRKQM) has biased composition (basic residues). The interval 34–74 (SALRSRRKQMRPTGKSVLKRPRKVTDRKTEEKIRTNRRKTP) is disordered. The segment covering 56–67 (KVTDRKTEEKIR) has biased composition (basic and acidic residues). Phosphoserine occurs at positions 251 and 260. Positions 278-319 (EMQPLQENISPACPTPPYRSRETEKEDETLSPISVDFSSYLS) are disordered.

Interacts with NDC1 and MPS2.

The polypeptide is NAP1-binding protein (NBP1) (Saccharomyces cerevisiae (strain ATCC 204508 / S288c) (Baker's yeast)).